A 295-amino-acid polypeptide reads, in one-letter code: Nucleotide-binding protein YjiE (295 aa).

Residue 12-19 (GMSGAGKT) participates in ATP binding. 63–66 (DMRS) lines the GTP pocket.

This sequence belongs to the RapZ-like family.

Functionally, displays ATPase and GTPase activities. This chain is Nucleotide-binding protein YjiE (yjiE), found in Lactococcus lactis subsp. lactis (strain IL1403) (Streptococcus lactis).